Here is a 463-residue protein sequence, read N- to C-terminus: Histone acetyltransferase mst1 (463 aa).

In terms of domain architecture, Tudor-knot spans 22–74; that stretch reads VYKSKVFAFKDGEYRKAEILMIQKRTRGVVYYVHYNDYNKRLDEWITIDNIDL. The tract at residues 76–145 is disordered; sequence KGIEYPPPEK…GSNAGNESLP (70 aa). Basic residues predominate over residues 87–99; the sequence is KKAHGKGKSSKRP. Residues 111–121 are compositionally biased toward low complexity; the sequence is PSKTEPSTPST. Positions 179-451 constitute an MYST-type HAT domain; that stretch reads ARIRNINKIC…NGDLLADWQP (273 aa). A C2HC MYST-type zinc finger spans residues 212–237; it reads VYICSFCFCYYGSERQFQRHREKCTL. An ESA1-RPD3 motif motif is present at residues 262–283; sequence RTWCRNICLLSKLFLDHKMLYY. An N6-acetyllysine; by autocatalysis modification is found at K279. Residues 320-324 and 329-335 each bind acetyl-CoA; these read ACILT and QRHGYGK. E355 (proton donor/acceptor) is an active-site residue. S359 serves as a coordination point for acetyl-CoA.

The protein belongs to the MYST (SAS/MOZ) family. Component of the NuA4 histone acetyltransferase complex. Interacts with arp4. In terms of processing, autoacetylation at Lys-279 is required for proper function.

The protein localises to the nucleus. It localises to the chromosome. It carries out the reaction L-lysyl-[histone] + acetyl-CoA = N(6)-acetyl-L-lysyl-[histone] + CoA + H(+). The catalysed reaction is L-lysyl-[protein] + acetyl-CoA = N(6)-acetyl-L-lysyl-[protein] + CoA + H(+). It catalyses the reaction 2-hydroxyisobutanoyl-CoA + L-lysyl-[protein] = N(6)-(2-hydroxyisobutanoyl)-L-lysyl-[protein] + CoA + H(+). The enzyme catalyses (2E)-butenoyl-CoA + L-lysyl-[protein] = N(6)-(2E)-butenoyl-L-lysyl-[protein] + CoA + H(+). Catalytic component of the NuA4 histone acetyltransferase (HAT) complex which is involved in epigenetic transcriptional activation of selected genes principally by acetylation of nucleosomal histones H4, H3, H2B, H2A and H2A variant H2A.Z. Acetylates histone H4 to form H4K5ac, H4K8ac, H4K12ac and H4K16ac, histone H3 to form H3K14ac, and histone H2A to form H2AK4ac and H2AK7ac. The NuA4 complex is involved in the DNA damage response and is required for chromosome segregation. The NuA4 complex plays a direct role in repair of DNA double-strand breaks (DSBs) through homologous recombination. Recruitment to promoters depends on H3K4me. Also acetylates non-histone proteins. In addition to protein acetyltransferase, can use different acyl-CoA substrates, such as 2-hydroxyisobutanoyl-CoA (2-hydroxyisobutyryl-CoA) or (2E)-butenoyl-CoA (crotonyl-CoA), and is able to mediate protein 2-hydroxyisobutyrylation and crotonylation, respectively. The sequence is that of Histone acetyltransferase mst1 from Schizosaccharomyces pombe (strain 972 / ATCC 24843) (Fission yeast).